We begin with the raw amino-acid sequence, 553 residues long: uncharacterized protein (553 aa).

Positions Met-1–Ala-31 are cleaved as a signal peptide. Ser-207 acts as the Acyl-ester intermediate in catalysis. Residues Cys-275 and Cys-292 are joined by a disulfide bond. Ca(2+) contacts are provided by Asp-276, Asp-279, Val-281, Asp-283, and Leu-285. Catalysis depends on charge relay system residues Asp-444 and His-482. Cysteines 528 and 550 form a disulfide.

It belongs to the tannase family.

This is an uncharacterized protein from Agrobacterium fabrum (strain C58 / ATCC 33970) (Agrobacterium tumefaciens (strain C58)).